We begin with the raw amino-acid sequence, 402 residues long: Olfactomedin-like protein 1 (402 aa).

Residues 1-28 form the signal peptide; that stretch reads MMVALRGASALLVLFLAAFLPPPQCTQD. Asn-66 carries an N-linked (GlcNAc...) asparagine glycan. Residues 79–133 adopt a coiled-coil conformation; it reads SEYKSAVGNLALRVERAQREIDYIQYLREADECIESEDKTLAEMLLQEAEEEKKI. N-linked (GlcNAc...) asparagine glycosylation is found at Asn-138 and Asn-183. One can recognise an Olfactomedin-like domain in the interval 140 to 397; it reads SCDNMLMGIK…QIIYKLQTKR (258 aa). A disulfide bridge links Cys-141 with Cys-324.

Highly N-glycosylated. As to expression, mainly expressed in the small intestine, liver, lung and heart.

The protein localises to the secreted. The chain is Olfactomedin-like protein 1 (OLFML1) from Homo sapiens (Human).